The primary structure comprises 500 residues: Protein DML1 (500 aa).

Belongs to the misato family.

It localises to the mitochondrion. Involved in the partitioning of the mitochondrial organelle and mitochondrial DNA (mtDNA) inheritance. In Scheffersomyces stipitis (strain ATCC 58785 / CBS 6054 / NBRC 10063 / NRRL Y-11545) (Yeast), this protein is Protein DML1 (DML1).